Reading from the N-terminus, the 407-residue chain is MTKLDPYFGEYGGMYVPQILMPALKQLETAFVEAQEDEAFKTEFNDLLKNYAGRPTALTLTRNLSPNPLVKIYLKREDLLHGGAHKTNQVLGQALLAKRMGKKEIIAETGAGQHGVATALACALLDLKCKVYMGAKDVERQSPNVFRMKLMGAEVIPVTSGSSTLKDACNEAMRDWSGSYDKAHYLLGTAAGPHPFPTIVREFQRMIGAETKKQILEREGRLPDAVIACVGGGSNAIGMFADFIDEESVKLIGVEPAGLGIDTPMHGAPLKHGKTGIFFGMKAPLMQDREGQIEESYSISAGLDFPSVGPQHAHLAATGRATYESATDDEALEAFQLLARSEGIIPALESAHALAYAVKMAKAATQETILVVNLSGRGDKDIFTVADILEERERSQTGQQKEESGND.

An N6-(pyridoxal phosphate)lysine modification is found at K86.

Belongs to the TrpB family. Tetramer of two alpha and two beta chains. It depends on pyridoxal 5'-phosphate as a cofactor.

It carries out the reaction (1S,2R)-1-C-(indol-3-yl)glycerol 3-phosphate + L-serine = D-glyceraldehyde 3-phosphate + L-tryptophan + H2O. Its pathway is amino-acid biosynthesis; L-tryptophan biosynthesis; L-tryptophan from chorismate: step 5/5. The beta subunit is responsible for the synthesis of L-tryptophan from indole and L-serine. The polypeptide is Tryptophan synthase beta chain (Shewanella woodyi (strain ATCC 51908 / MS32)).